Consider the following 80-residue polypeptide: Large ribosomal subunit protein bL31B (80 aa).

Belongs to the bacterial ribosomal protein bL31 family. Type B subfamily. In terms of assembly, part of the 50S ribosomal subunit.

This chain is Large ribosomal subunit protein bL31B, found in Exiguobacterium sp. (strain ATCC BAA-1283 / AT1b).